We begin with the raw amino-acid sequence, 434 residues long: Nicotinate phosphoribosyltransferase (434 aa).

A Phosphohistidine; by autocatalysis modification is found at H242.

The protein belongs to the NAPRTase family. In terms of processing, transiently phosphorylated on a His residue during the reaction cycle. Phosphorylation strongly increases the affinity for substrates and increases the rate of nicotinate D-ribonucleotide production. Dephosphorylation regenerates the low-affinity form of the enzyme, leading to product release.

The catalysed reaction is nicotinate + 5-phospho-alpha-D-ribose 1-diphosphate + ATP + H2O = nicotinate beta-D-ribonucleotide + ADP + phosphate + diphosphate. It functions in the pathway cofactor biosynthesis; NAD(+) biosynthesis; nicotinate D-ribonucleotide from nicotinate: step 1/1. In terms of biological role, catalyzes the synthesis of beta-nicotinate D-ribonucleotide from nicotinate and 5-phospho-D-ribose 1-phosphate at the expense of ATP. In Bartonella tribocorum (strain CIP 105476 / IBS 506), this protein is Nicotinate phosphoribosyltransferase.